A 264-amino-acid polypeptide reads, in one-letter code: Ribosomal RNA small subunit methyltransferase A (264 aa).

Positions 15, 17, 42, 64, 90, and 109 each coordinate S-adenosyl-L-methionine.

This sequence belongs to the class I-like SAM-binding methyltransferase superfamily. rRNA adenine N(6)-methyltransferase family. RsmA subfamily.

The protein resides in the cytoplasm. The catalysed reaction is adenosine(1518)/adenosine(1519) in 16S rRNA + 4 S-adenosyl-L-methionine = N(6)-dimethyladenosine(1518)/N(6)-dimethyladenosine(1519) in 16S rRNA + 4 S-adenosyl-L-homocysteine + 4 H(+). In terms of biological role, specifically dimethylates two adjacent adenosines (A1518 and A1519) in the loop of a conserved hairpin near the 3'-end of 16S rRNA in the 30S particle. May play a critical role in biogenesis of 30S subunits. This is Ribosomal RNA small subunit methyltransferase A from Wolbachia pipientis subsp. Culex pipiens (strain wPip).